Reading from the N-terminus, the 435-residue chain is Galactose/lactose metabolism regulatory protein GAL80 (435 aa).

Residue Met-1 is modified to N-acetylmethionine.

It to K.lactis GAL80. Monomer.

In terms of biological role, this protein is a negative regulator for the gene expression of the lactose/galactose metabolic genes. It binds to GAL4 and so blocks transcriptional activation by it, in the absence of an inducing sugar. This is Galactose/lactose metabolism regulatory protein GAL80 (GAL80) from Saccharomyces cerevisiae (strain ATCC 204508 / S288c) (Baker's yeast).